We begin with the raw amino-acid sequence, 294 residues long: Survival motor neuron protein (294 aa).

Residues 1 to 12 are compositionally biased toward gly residues; the sequence is MAMSSGGSGGGV. The segment at 1–32 is disordered; that stretch reads MAMSSGGSGGGVPEQEDSVLFRRGTGQSDDSD. An N-acetylalanine modification is found at Ala-2. Phosphoserine; by PKA occurs at positions 4, 5, and 8. Residues 13–44 form a P1 (binding site for GEMIN2) region; that stretch reads PEQEDSVLFRRGTGQSDDSDIWDDTALIKAYD. A Phosphothreonine modification is found at Thr-25. 2 positions are modified to phosphoserine: Ser-28 and Ser-31. Residue Lys-51 forms a Glycyl lysine isopeptide (Lys-Gly) (interchain with G-Cter in SUMO2) linkage. Residues 58 to 88 are disordered; it reads DICETSGKPKTTPKRKPAKKNKSQKKNTAAP. The span at 68–82 shows a compositional bias: basic residues; the sequence is TTPKRKPAKKNKSQK. Phosphothreonine is present on Thr-69. Position 85 is a phosphothreonine; by PKA (Thr-85). The Tudor domain occupies 91–151; that stretch reads QWKVGDKCSA…LSPISEVANN (61 aa). The required for interaction with RPP20/POP7 stretch occupies residues 97–209; the sequence is KCSAIWSEDG…MPGPRLGPGK (113 aa). Positions 156–166 are enriched in low complexity; sequence AQENENESQVS. A disordered region spans residues 156–222; that stretch reads AQENENESQV…KFNGPPPPPP (67 aa). Ser-187 is subject to Phosphoserine; by PKA. The segment covering 194-204 has biased composition (pro residues); the sequence is LPPPPPMPGPR. Lys-209 is covalently cross-linked (Glycyl lysine isopeptide (Lys-Gly) (interchain with G-Cter in SUMO2)). Residues 240-267 form a P2 (binding site for SM B) region; it reads PPIIPPPPPICPDSLDDADALGSMLISW. Residues 279–294 form a required for interaction with SYNCRIP region; it reads GFRQNQKEGRCSHSLN.

It belongs to the SMN family. In terms of assembly, homooligomer; may form higher order homooligomers in the dimer to octamer range. Part of the core SMN complex that contains SMN1, GEMIN2/SIP1, DDX20/GEMIN3, GEMIN4, GEMIN5, GEMIN6, GEMIN7, GEMIN8 and STRAP/UNRIP. Part of the SMN-Sm complex that contains SMN1, GEMIN2/SIP1, DDX20/GEMIN3, GEMIN4, GEMIN5, GEMIN6, GEMIN7, GEMIN8, STRAP/UNRIP and the Sm proteins SNRPB, SNRPD1, SNRPD2, SNRPD3, SNRPE, SNRPF and SNRPG. Component of an import snRNP complex composed of KPNB1, RNUT1, SMN1 and ZNF259. Interacts with DDX20, FBL, NOLA1, RNUT1, SYNCRIP and with several spliceosomal snRNP core Sm proteins, including SNRPB, SNRPD1, SNRPD2, SNRPD3, SNRPE and ILF3. Interacts with GEMIN2; the interaction is direct. Interacts with GEMIN3; the interaction is direct. Interacts with GEMIN8; the interaction is direct. Interacts with SNRPB; the interaction is direct. Interacts (via Tudor domain) with SNRPD1 (via C-terminus); the interaction is direct. Interacts with SNRPD2; the interaction is direct. Interacts (via Tudor domain) with SNRPD3 (via C-terminus); the interaction is direct. Interacts with SNRPE; the interaction is direct. Interacts with OSTF1, LSM10, LSM11 and RPP20/POP7. Interacts (via C-terminal region) with ZPR1 (via C-terminal region). Interacts (via Tudor domain) with COIL. Interacts with SETX; recruits SETX to POLR2A. Interacts with POLR2A (via the C-terminal domain (CTD)). Interacts with PRMT5. Interacts with XRN2. Interacts (via C-terminus) with FMR1 (via C-terminus); the interaction is direct and occurs in a RNA-independent manner. Interacts (via Tudor domain) with SF3B2 ('Arg-508'-methylated form). Interacts with WRAP53/TCAB1. Interacts (via Tudor domain) with ELAVL4 in an RNA-independent manner; the interaction is required for localization of ELAVL4 to RNA granules. Interacts with FRG1.

It is found in the nucleus. Its subcellular location is the gem. It localises to the cajal body. The protein resides in the cytoplasm. The protein localises to the cytoplasmic granule. It is found in the perikaryon. Its subcellular location is the cell projection. It localises to the neuron projection. The protein resides in the axon. The protein localises to the myofibril. It is found in the sarcomere. Its subcellular location is the z line. The SMN complex catalyzes the assembly of small nuclear ribonucleoproteins (snRNPs), the building blocks of the spliceosome, and thereby plays an important role in the splicing of cellular pre-mRNAs. Most spliceosomal snRNPs contain a common set of Sm proteins SNRPB, SNRPD1, SNRPD2, SNRPD3, SNRPE, SNRPF and SNRPG that assemble in a heptameric protein ring on the Sm site of the small nuclear RNA to form the core snRNP (Sm core). In the cytosol, the Sm proteins SNRPD1, SNRPD2, SNRPE, SNRPF and SNRPG are trapped in an inactive 6S pICln-Sm complex by the chaperone CLNS1A that controls the assembly of the core snRNP. To assemble core snRNPs, the SMN complex accepts the trapped 5Sm proteins from CLNS1A forming an intermediate. Binding of snRNA inside 5Sm ultimately triggers eviction of the SMN complex, thereby allowing binding of SNRPD3 and SNRPB to complete assembly of the core snRNP. Within the SMN complex, SMN1 acts as a structural backbone and together with GEMIN2 it gathers the Sm complex subunits. Ensures the correct splicing of U12 intron-containing genes that may be important for normal motor and proprioceptive neurons development. Also required for resolving RNA-DNA hybrids created by RNA polymerase II, that form R-loop in transcription terminal regions, an important step in proper transcription termination. May also play a role in the metabolism of small nucleolar ribonucleoprotein (snoRNPs). The polypeptide is Survival motor neuron protein (SMN1) (Macaca fascicularis (Crab-eating macaque)).